Reading from the N-terminus, the 965-residue chain is Phosphatidylethanolamine N-methyltransferase (965 aa).

The interval 1-55 (MSSSAADPFAARLNSDVRQRHPTASATSKNVEGTSQQKQQQQQQQSEANAAASRV) is disordered. Residues 1 to 91 (MSSSAADPFA…DPREPKNLSD (91 aa)) are Lumenal-facing. A compositionally biased stretch (polar residues) spans 22–35 (PTASATSKNVEGTS). A compositionally biased stretch (low complexity) spans 36–45 (QQKQQQQQQQ). A helical membrane pass occupies residues 92–112 (VAVLAIIALHFLAAYYLPWGV). The Cytoplasmic segment spans residues 113-115 (KRP). Residues 116-136 (LFAAIFMFWRLAYNVGIGYLL) form a helical membrane-spanning segment. Over 137-201 (TIQSKYKLLV…EYNTWLTFRR (65 aa)) the chain is Lumenal. The chain crosses the membrane as a helical span at residues 202–222 (VVDLILMCDFISYCLFAIVCA). Residues 223 to 229 (HKPDGEG) lie on the Cytoplasmic side of the membrane. A helical membrane pass occupies residues 230–250 (LFMCFARWAAGITLVGFNLWV). The Lumenal segment spans residues 251-279 (KLDAHRVVKDYAWYWGDFFYLIEQELTFD). A helical transmembrane segment spans residues 280–300 (GVFELAPHPMYSIGYAGYYGI). At 301–306 (SMMAAS) the chain is on the cytoplasmic side. Residues 307–327 (YDVLFISIIAHAAQFAFLVIV) traverse the membrane as a helical segment. The Lumenal portion of the chain corresponds to 328 to 389 (ENPHIEKTYN…IGLKNLDFFR (62 aa)). The chain crosses the membrane as a helical span at residues 390-410 (ITDVAIVLLCAYLAVVTMVTP). Residues 411 to 417 (NTRFYQA) are Cytoplasmic-facing. The chain crosses the membrane as a helical span at residues 418 to 438 (LFVLHALAWRLWYSAGLGVIL). Residues 439 to 467 (TMQSEEKMFTRHFLKYGESVGEAWRQWKG) lie on the Lumenal side of the membrane. The helical transmembrane segment at 468–488 (IYHLSNCLCHASFIAASYKMY) threads the bilayer. At 489–496 (EFPADWTY) the chain is on the cytoplasmic side. Residues 497–517 (GWALLKHVVGLSLIALQVWTA) traverse the membrane as a helical segment. Over 518 to 573 (TSIYESLGEFGWFYGDFFFDSKRQLTYTSIYRFLNNPERVFGTAGLWGAALITWSR) the chain is Lumenal. Residues 574 to 594 (AIFLMALAGHFLTLAFLAYVE) traverse the membrane as a helical segment. Residues 595 to 965 (KPHMQKVYGR…TTPVDSKFSE (371 aa)) lie on the Cytoplasmic side of the membrane.

This sequence belongs to the class VI-like SAM-binding methyltransferase superfamily. CHO2 family.

It is found in the endoplasmic reticulum membrane. The enzyme catalyses a 1,2-diacyl-sn-glycero-3-phosphoethanolamine + S-adenosyl-L-methionine = a 1,2-diacyl-sn-glycero-3-phospho-N-methylethanolamine + S-adenosyl-L-homocysteine + H(+). The protein operates within phospholipid metabolism; phosphatidylcholine biosynthesis. Functionally, catalyzes the first step of the methylation pathway of phosphatidylcholine biosynthesis, the SAM-dependent methylation of phosphatidylethanolamine (PE) to phosphatidylmonomethylethanolamine (PMME). This is Phosphatidylethanolamine N-methyltransferase from Neurospora crassa (strain ATCC 24698 / 74-OR23-1A / CBS 708.71 / DSM 1257 / FGSC 987).